Reading from the N-terminus, the 927-residue chain is 2-oxoadipate dehydrogenase complex component E1 (927 aa).

The protein belongs to the alpha-ketoglutarate dehydrogenase family. The 2-oxoadipate dehydrogenase complex is composed of OADH (2-oxoadipate dehydrogenase; E1a), DLST (dihydrolipoamide succinyltransferase; E2) and DLD (dihydrolipoamide dehydrogenase; E3). E1a functional unit is a dimer. Requires thiamine diphosphate as cofactor.

Its subcellular location is the mitochondrion. It carries out the reaction N(6)-[(R)-lipoyl]-L-lysyl-[protein] + 2-oxoadipate + H(+) = N(6)-[(R)-S(8)-glutaryldihydrolipoyl]-L-lysyl-[protein] + CO2. Its pathway is amino-acid degradation. 2-oxoadipate dehydrogenase (E1a) component of the 2-oxoadipate dehydrogenase complex (OADHC). Participates in the first step, rate limiting for the overall conversion of 2-oxoadipate (alpha-ketoadipate) to glutaryl-CoA and CO(2) catalyzed by the whole OADHC. Catalyzes the irreversible decarboxylation of 2-oxoadipate via the thiamine diphosphate (ThDP) cofactor and subsequent transfer of the decarboxylated acyl intermediate on an oxidized dihydrolipoyl group that is covalently amidated to the E2 enzyme (dihydrolipoyllysine-residue succinyltransferase or DLST). Can catalyze the decarboxylation of 2-oxoglutarate in vitro, but at a much lower rate than 2-oxoadipate. Responsible for the last step of L-lysine, L-hydroxylysine and L-tryptophan catabolism with the common product being 2-oxoadipate. The chain is 2-oxoadipate dehydrogenase complex component E1 (dhtkd1) from Xenopus laevis (African clawed frog).